Consider the following 213-residue polypeptide: Orotate phosphoribosyltransferase (213 aa).

A 5-phospho-alpha-D-ribose 1-diphosphate-binding site is contributed by Lys-26. 34-35 serves as a coordination point for orotate; sequence FF. 5-phospho-alpha-D-ribose 1-diphosphate contacts are provided by residues 72 to 73, Arg-99, Lys-100, Lys-103, His-105, and 124 to 132; these read YK and DDVITAGTA. Orotate is bound by residues Thr-128 and Arg-156.

This sequence belongs to the purine/pyrimidine phosphoribosyltransferase family. PyrE subfamily. In terms of assembly, homodimer. It depends on Mg(2+) as a cofactor.

The catalysed reaction is orotidine 5'-phosphate + diphosphate = orotate + 5-phospho-alpha-D-ribose 1-diphosphate. The protein operates within pyrimidine metabolism; UMP biosynthesis via de novo pathway; UMP from orotate: step 1/2. Its function is as follows. Catalyzes the transfer of a ribosyl phosphate group from 5-phosphoribose 1-diphosphate to orotate, leading to the formation of orotidine monophosphate (OMP). This Klebsiella pneumoniae subsp. pneumoniae (strain ATCC 700721 / MGH 78578) protein is Orotate phosphoribosyltransferase.